The chain runs to 297 residues: MKRPDYRTLQALDAVIRERGFERAAQKLCITQSAVSQRIKQLENMFGQPLLVRTVPPRPTEQGQKLLALLRQVELLEEEWLGDEQTGSTPLLLSLAVNADSLATWLLPALANVLSDSPIRLNLQVEDETRTQERLRRGEVVGAVSIQPQALPSCLVDQLGALDYLFVASKEFAQRYFPNGVTRSALLKAPVVAFDHLDDMHQAFLQQNFDLPPGSVPCHIVNSSEAFVQLARQGTTCCMIPHLQIEKELKSGELIDLTPGLFQRRMLYWHRFAPESRMMRRVTDALIDYGHKVLRQD.

The region spanning 4–60 (PDYRTLQALDAVIRERGFERAAQKLCITQSAVSQRIKQLENMFGQPLLVRTVPPRPT) is the HTH lysR-type domain. The H-T-H motif DNA-binding region spans 21–40 (FERAAQKLCITQSAVSQRIK).

Belongs to the LysR transcriptional regulatory family. As to quaternary structure, homodimer.

In terms of biological role, controls the transcription of genes involved in arginine and lysine metabolism. This chain is HTH-type transcriptional regulator ArgP, found in Klebsiella pneumoniae (strain 342).